A 174-amino-acid polypeptide reads, in one-letter code: Guided entry of tail-anchored proteins factor 1 (174 aa).

Topologically, residues 1–8 (MSASETDR) are lumenal. Residues 9 to 29 (WAWLLVLSFVFGCNLLRILLP) traverse the membrane as a helical segment. Topologically, residues 30–99 (SLSSFISRVL…VKARTAQLAK (70 aa)) are cytoplasmic. A coiled-coil region spans residues 39 to 94 (LQKDAEQESQMRAEIQGMKQELSTVNMMDEFARYARLERKINKMTDKLKTHVKART). The interaction with GET3/TRC40 stretch occupies residues 39 to 97 (LQKDAEQESQMRAEIQGMKQELSTVNMMDEFARYARLERKINKMTDKLKTHVKARTAQL). The chain crosses the membrane as a helical span at residues 100–120 (IKWFISVAFYILQAALMISLI). At 121–148 (WKYYSVPVAVVPSKWITPLDRLVAFPTR) the chain is on the lumenal side. Residues 149-169 (VAGGIGITCWILVCNKVVAIV) traverse the membrane as a helical segment. At 170–174 (LHPFS) the chain is on the cytoplasmic side.

The protein belongs to the WRB/GET1 family. Component of the Golgi to ER traffic (GET) complex, which is composed of GET1, CAMLG/GET2 and GET3. Within the complex, GET1 and CAMLG form a heterotetramer which is stabilized by phosphatidylinositol binding and which binds to the GET3 homodimer. Interacts with CAMLG/GET2 (via C-terminus). GET3 shows a higher affinity for CAMLG than for GET1.

The protein resides in the endoplasmic reticulum membrane. Its function is as follows. Required for the post-translational delivery of tail-anchored (TA) proteins to the endoplasmic reticulum. Together with CAMLG/GET2, acts as a membrane receptor for soluble GET3/TRC40, which recognizes and selectively binds the transmembrane domain of TA proteins in the cytosol. Required to ensure correct topology and ER insertion of CAMLG. This is Guided entry of tail-anchored proteins factor 1 from Mus musculus (Mouse).